The primary structure comprises 314 residues: Phospho-N-acetylmuramoyl-pentapeptide-transferase (314 aa).

10 consecutive transmembrane segments (helical) span residues 4-24, 52-72, 77-97, 111-131, 146-166, 169-189, 191-211, 219-239, 242-262, and 294-314; these read LIFY…PIFI, TMGG…TYFI, LFLI…LDDY, IQKL…ISIF, LDLK…MSNA, LTDG…LFTA, IAGI…AYLF, IFMG…LALY, VELF…SVII, and IVLI…GGVL.

It belongs to the glycosyltransferase 4 family. MraY subfamily. Requires Mg(2+) as cofactor.

It localises to the cell inner membrane. It carries out the reaction UDP-N-acetyl-alpha-D-muramoyl-L-alanyl-gamma-D-glutamyl-meso-2,6-diaminopimeloyl-D-alanyl-D-alanine + di-trans,octa-cis-undecaprenyl phosphate = di-trans,octa-cis-undecaprenyl diphospho-N-acetyl-alpha-D-muramoyl-L-alanyl-D-glutamyl-meso-2,6-diaminopimeloyl-D-alanyl-D-alanine + UMP. The protein operates within cell wall biogenesis; peptidoglycan biosynthesis. Functionally, catalyzes the initial step of the lipid cycle reactions in the biosynthesis of the cell wall peptidoglycan: transfers peptidoglycan precursor phospho-MurNAc-pentapeptide from UDP-MurNAc-pentapeptide onto the lipid carrier undecaprenyl phosphate, yielding undecaprenyl-pyrophosphoryl-MurNAc-pentapeptide, known as lipid I. The polypeptide is Phospho-N-acetylmuramoyl-pentapeptide-transferase (Petrotoga mobilis (strain DSM 10674 / SJ95)).